A 140-amino-acid polypeptide reads, in one-letter code: MSDLPSSFDNGNSIDENEKSPGYYKILERCKEQPLVPLGCLATCGALILSARALRVGNKRQANRMFFARVAFQGLTVAALIGGAMYYGQDPKQKLEQKEREKMLARHREKLWIEELERRDLEVQERRKRAAAFRQQEEEK.

The region spanning 7–98 (SFDNGNSIDE…QDPKQKLEQK (92 aa)) is the HIG1 domain. Transmembrane regions (helical) follow at residues 35–54 (LVPLGCLATCGALILSARAL) and 66–88 (FFARVAFQGLTVAALIGGAMYYG).

It belongs to the RCF1 family. In terms of assembly, associates with the respiratory chain complex III/complex IV supercomplex.

It localises to the mitochondrion membrane. In terms of biological role, cytochrome c oxidase subunit which plays a role in assembly of respiratory supercomplexes. The chain is Respiratory supercomplex factor 1, mitochondrial (RCF1) from Yarrowia lipolytica (strain CLIB 122 / E 150) (Yeast).